Reading from the N-terminus, the 347-residue chain is Protein RecA (347 aa).

65-72 (GPESSGKT) lines the ATP pocket. The segment covering 327–336 (KFEPTELSRE) has biased composition (basic and acidic residues). A disordered region spans residues 327-347 (KFEPTELSREEGDEDTLEDAM). The segment covering 337 to 347 (EGDEDTLEDAM) has biased composition (acidic residues).

Belongs to the RecA family.

The protein localises to the cytoplasm. Its function is as follows. Can catalyze the hydrolysis of ATP in the presence of single-stranded DNA, the ATP-dependent uptake of single-stranded DNA by duplex DNA, and the ATP-dependent hybridization of homologous single-stranded DNAs. It interacts with LexA causing its activation and leading to its autocatalytic cleavage. The polypeptide is Protein RecA (Xylella fastidiosa (strain M23)).